Reading from the N-terminus, the 567-residue chain is Potassium-transporting ATPase potassium-binding subunit (567 aa).

A run of 12 helical transmembrane segments spans residues 5-25, 64-84, 136-156, 179-199, 254-274, 285-305, 328-350, 375-395, 421-441, 459-481, 486-506, and 529-549; these read GWLQ…PLGG, TTYS…LYFL, GFTV…IALI, LYVL…LGVP, ISNL…TNVF, WAIL…TYWA, VRFG…CGAV, IVGG…IAIF, MLAV…SVVL, ILYA…SANT, ITLG…ALAI, and LFVG…FFPA.

It belongs to the KdpA family. The system is composed of three essential subunits: KdpA, KdpB and KdpC.

It localises to the cell inner membrane. Part of the high-affinity ATP-driven potassium transport (or Kdp) system, which catalyzes the hydrolysis of ATP coupled with the electrogenic transport of potassium into the cytoplasm. This subunit binds the periplasmic potassium ions and delivers the ions to the membrane domain of KdpB through an intramembrane tunnel. This Rhizobium rhizogenes (strain K84 / ATCC BAA-868) (Agrobacterium radiobacter) protein is Potassium-transporting ATPase potassium-binding subunit.